A 124-amino-acid chain; its full sequence is Small ribosomal subunit protein uS12 (124 aa).

The tract at residues 1–32 is disordered; the sequence is MPTIQQLVRKGREDKVVKTKTPALKGSPQRRG. Residue D89 is modified to 3-methylthioaspartic acid. The disordered stretch occupies residues 105–124; sequence QGVKNRKQARSRYGAKKEKS. The segment covering 108 to 118 has biased composition (basic residues); the sequence is KNRKQARSRYG.

It belongs to the universal ribosomal protein uS12 family. Part of the 30S ribosomal subunit. Contacts proteins S8 and S17. May interact with IF1 in the 30S initiation complex.

Its function is as follows. With S4 and S5 plays an important role in translational accuracy. In terms of biological role, interacts with and stabilizes bases of the 16S rRNA that are involved in tRNA selection in the A site and with the mRNA backbone. Located at the interface of the 30S and 50S subunits, it traverses the body of the 30S subunit contacting proteins on the other side and probably holding the rRNA structure together. The combined cluster of proteins S8, S12 and S17 appears to hold together the shoulder and platform of the 30S subunit. The protein is Small ribosomal subunit protein uS12 of Kineococcus radiotolerans (strain ATCC BAA-149 / DSM 14245 / SRS30216).